Here is a 265-residue protein sequence, read N- to C-terminus: 4-hydroxy-tetrahydrodipicolinate reductase (265 aa).

NAD(+)-binding positions include 7 to 12 and aspartate 33; that span reads GASGRM. An NADP(+)-binding site is contributed by arginine 34. Residues 96–98 and 120–123 contribute to the NAD(+) site; these read GTT and AANM. Histidine 153 functions as the Proton donor/acceptor in the catalytic mechanism. Position 154 (histidine 154) interacts with (S)-2,3,4,5-tetrahydrodipicolinate. Lysine 157 serves as the catalytic Proton donor. Position 163 to 164 (163 to 164) interacts with (S)-2,3,4,5-tetrahydrodipicolinate; sequence GT.

Belongs to the DapB family.

It is found in the cytoplasm. It carries out the reaction (S)-2,3,4,5-tetrahydrodipicolinate + NAD(+) + H2O = (2S,4S)-4-hydroxy-2,3,4,5-tetrahydrodipicolinate + NADH + H(+). The catalysed reaction is (S)-2,3,4,5-tetrahydrodipicolinate + NADP(+) + H2O = (2S,4S)-4-hydroxy-2,3,4,5-tetrahydrodipicolinate + NADPH + H(+). It participates in amino-acid biosynthesis; L-lysine biosynthesis via DAP pathway; (S)-tetrahydrodipicolinate from L-aspartate: step 4/4. Catalyzes the conversion of 4-hydroxy-tetrahydrodipicolinate (HTPA) to tetrahydrodipicolinate. The protein is 4-hydroxy-tetrahydrodipicolinate reductase of Burkholderia lata (strain ATCC 17760 / DSM 23089 / LMG 22485 / NCIMB 9086 / R18194 / 383).